The following is a 156-amino-acid chain: Ribosomal RNA large subunit methyltransferase H (156 aa).

Residues Leu-73, Gly-104, and 123–128 (ISSLTL) each bind S-adenosyl-L-methionine.

Belongs to the RNA methyltransferase RlmH family. In terms of assembly, homodimer.

The protein resides in the cytoplasm. The enzyme catalyses pseudouridine(1915) in 23S rRNA + S-adenosyl-L-methionine = N(3)-methylpseudouridine(1915) in 23S rRNA + S-adenosyl-L-homocysteine + H(+). Its function is as follows. Specifically methylates the pseudouridine at position 1915 (m3Psi1915) in 23S rRNA. The chain is Ribosomal RNA large subunit methyltransferase H from Herminiimonas arsenicoxydans.